The chain runs to 1398 residues: MDWLLATPQLYSAFSSLGCLEGDTYVVNPNALAILEEINYKLTYEDQTLRTFRRAIGFGQNVRSDLIPLLENAKDDAVLESVIRILVNLTVPVECLFSVDVMYRTDVGRHTIFELNKLLYTSKEAFTEARSTKSVVEYMKHILESDPKLSPHKCDQINNCLLLLRNILHIPETHAHCVMPMMQSMPHGISMQNTILWNLFIQSIDKLLLYLMTCPQRAFWGVTMVQLIALIYKDQHVSTLQKLLSLWFEASLSESSEDNESNTSPPKQGSGDSSPMLTSDPTSDSSDNGSNGRGMGGGMREGTAATLQEVSRKGQEYQNAMARVPADKPDGSEEASDMTGNDSEQPGSPEQSQPAGESMDDGDYEDQRHRQLNEHGEEDEDEDEVEEEEYLQLGPASEPLNLTQQPADKVNNTTNPTSSAPQGCLGNEPFKPPPPLPVRASTSAHAQMQKFNESSYASHVSAVKLGQKSPHAGQLQLTKGKCCPQKRECPSSQSELSDCGYGTQVENQESISTSSNDDDGPQGKPQHQKPPCNTKPRNKPRTIMSPMDKKELRRKKLVKRSKSSLINMKGLVQHTPTDDDISNLLKEFTVDFLLKGYSYLVEELHMQLLSNAKVPIDTSHFFWLVTYFLKFAAQLELDMEHIDTILTYDVLSYLTYEGVSLCEQLELNARQEGSDLKPYLRRMHLVVTAIREFLQAIDTYNKVTHLNEDDKAHLRQLQLQISEMSDLRCLFVLLLRRFNPSIHSKQYLQDLVVTNHILLLILDSSAKLGGCQTIRLSEHITQFATLEVMHYYGILLEDFNNNGEFVNDCIFTMMHHIGGDLGQIGVLFQPIILKTYSRIWEADYELCDDWSDLIEYVIHKFMNTPPKSPLTIPTTSLTEMTKEHNQEHTVCSWSQEEMDTLYWYYVQSKKNNDIVGKIVKLFSNNGNKLKTRISIIQQLLQQDIITLLEYDDLMKFEDAEYQRTLLTTPTSATTESGIEIKECAYGKPSDDVQILLDLIIKENKAQHLLWLQRILIECCFVKLTLRSGLKVPEGDHIMEPVAYHCICKQKSIPVVQWNNEQSTTMLYQPFVLLLHKLGIQLPADAGSIFARIPDYWTPETMYGLAKKLGPLDKLNLKFDASELEDATASSPSRYHHTGPRNSLSSVSSLDVDLGDTEELALIPEVDAAVEKAHAMASTPSPSEIFAVPKTKHCNSIIRYTPDPTPPVPNWLQLVMRSKCNHRTGPSGDPSDCIGSSSTTVDDEGFGKSISAATSQAASTSMSTVNPTTTLSLNMLNTFMGSHNENSSSSGCGGTVSSLSMVALMSTGAAGGGGNTSGLEMDVDASMKSSFERLEVNGSHFSRANNLDQEYSAMVASVYEKEKELNSDNVSLASDLTRMYVSDEDDRLERTEIRVPHYH.

The segment at 237–268 (VSTLQKLLSLWFEASLSESSEDNESNTSPPKQ) is necessary for normal circadian rhythm. 5 disordered regions span residues 254–300 (ESSE…GGMR), 322–452 (ARVP…QKFN), 478–555 (TKGK…LRRK), 1127–1147 (TASS…SSVS), and 1220–1239 (NHRT…SSTT). The span at 273–290 (SSPMLTSDPTSDSSDNGS) shows a compositional bias: low complexity. Residues 291 to 300 (NGRGMGGGMR) are compositionally biased toward gly residues. Over residues 338 to 355 (MTGNDSEQPGSPEQSQPA) the composition is skewed to polar residues. Residues 365-375 (EDQRHRQLNEH) are compositionally biased toward basic and acidic residues. Over residues 376–390 (GEEDEDEDEVEEEEY) the composition is skewed to acidic residues. Composition is skewed to polar residues over residues 400–421 (LNLT…SSAP), 440–452 (ASTS…QKFN), and 504–515 (QVENQESISTSS). The segment covering 522–531 (QGKPQHQKPP) has biased composition (low complexity). A Nuclear localization signal motif is present at residues 550 to 560 (KELRRKKLVKR).

This sequence belongs to the timeless family. In terms of assembly, forms a heterodimer with period (PER); the complex then translocates into the nucleus. In terms of processing, phosphorylated with a circadian rhythmicity. As to expression, expressed in head, photoreceptors, lateral neurons and glial cells in the lamina and medulla of the optic lobes. Expression follows a light-dark cycle, levels show a significant decrease at the end of the night and then remain low throughout the light period (at protein level).

It localises to the nucleus. It is found in the cytoplasm. The protein resides in the perinuclear region. In terms of biological role, required for the production of circadian rhythms. The biological cycle depends on the rhythmic formation and nuclear localization of the TIM-PER complex. Light induces the degradation of TIM, which promotes elimination of PER. Nuclear activity of the heterodimer coordinatively regulates PER and TIM transcription through a negative feedback loop. Behaves as a negative element in circadian transcriptional loop. Does not appear to bind DNA, suggesting indirect transcriptional inhibition. The sequence is that of Protein timeless (tim) from Drosophila melanogaster (Fruit fly).